A 332-amino-acid polypeptide reads, in one-letter code: T-cell leukemia homeobox protein 1 (332 aa).

Positions 203–262 form a DNA-binding region, homeobox; the sequence is KKKPRTSFTRLQICELEKRFHRQKYLASAERAALAKALKMTDAQVKTWFQNRRTKWRRQT. Lys238 carries the post-translational modification N6-acetyllysine.

Expressed in various embryonic tissues, including branchial arches, some component of the nervous system and spleen.

Its subcellular location is the nucleus. In terms of biological role, controls the genesis of the spleen. Binds to the DNA sequence 5'-GGCGGTAAGTGG-3'. This Mus musculus (Mouse) protein is T-cell leukemia homeobox protein 1 (Tlx1).